The chain runs to 203 residues: Urease accessory protein UreG (203 aa).

GTP is bound at residue 14–21 (GPVGSGKT).

It belongs to the SIMIBI class G3E GTPase family. UreG subfamily. Homodimer. UreD, UreF and UreG form a complex that acts as a GTP-hydrolysis-dependent molecular chaperone, activating the urease apoprotein by helping to assemble the nickel containing metallocenter of UreC. The UreE protein probably delivers the nickel.

The protein resides in the cytoplasm. In terms of biological role, facilitates the functional incorporation of the urease nickel metallocenter. This process requires GTP hydrolysis, probably effectuated by UreG. The protein is Urease accessory protein UreG of Rhizobium leguminosarum bv. viciae.